A 317-amino-acid polypeptide reads, in one-letter code: tRNA dimethylallyltransferase (317 aa).

Residue 14–21 coordinates ATP; it reads GPTAVGKT. 16 to 21 is a substrate binding site; sequence TAVGKT. The interval 39-42 is interaction with substrate tRNA; it reads DSMQ.

It belongs to the IPP transferase family. As to quaternary structure, monomer. Mg(2+) is required as a cofactor.

The enzyme catalyses adenosine(37) in tRNA + dimethylallyl diphosphate = N(6)-dimethylallyladenosine(37) in tRNA + diphosphate. Functionally, catalyzes the transfer of a dimethylallyl group onto the adenine at position 37 in tRNAs that read codons beginning with uridine, leading to the formation of N6-(dimethylallyl)adenosine (i(6)A). This is tRNA dimethylallyltransferase from Bacillus cereus (strain B4264).